Here is a 153-residue protein sequence, read N- to C-terminus: Ribosome-binding factor A (153 aa).

The segment at aspartate 116–valine 153 is disordered. The segment covering valine 119–glutamate 132 has biased composition (low complexity).

Belongs to the RbfA family. Monomer. Binds 30S ribosomal subunits, but not 50S ribosomal subunits or 70S ribosomes.

The protein localises to the cytoplasm. Its function is as follows. One of several proteins that assist in the late maturation steps of the functional core of the 30S ribosomal subunit. Associates with free 30S ribosomal subunits (but not with 30S subunits that are part of 70S ribosomes or polysomes). Required for efficient processing of 16S rRNA. May interact with the 5'-terminal helix region of 16S rRNA. The chain is Ribosome-binding factor A from Kocuria rhizophila (strain ATCC 9341 / DSM 348 / NBRC 103217 / DC2201).